The following is a 262-amino-acid chain: Late embryogenesis abundant protein 31 (262 aa).

Positions 6–10 match the Nuclear localization signal (NLS) motif; the sequence is QPKRP. SMP domains follow at residues 14–68, 136–192, and 201–260; these read VTYG…ANKR, ITIG…NHNA, and IKLI…NERA.

It belongs to the LEA type SMP family. Embryo specific, only in dry mature seeds.

The protein resides in the nucleus. It is found in the nucleolus. It localises to the cytoplasm. Functionally, LEA proteins are late embryonic proteins abundant in higher plant seed embryos. The function of those proteins is not known. Promotes germination rate. Enhances cation toxicity (e.g. lithium ion) and osmotic stress (e.g. NaCl and sorbitol) tolerance during germination and in seedlings. The sequence is that of Late embryogenesis abundant protein 31 from Arabidopsis thaliana (Mouse-ear cress).